Here is a 223-residue protein sequence, read N- to C-terminus: MIF4G domain-containing protein B (223 aa).

An MIF4G domain is found at 9 to 206; the sequence is DYKIQGFDAD…LEMIEYRAAG (198 aa).

It belongs to the MIF4GD family. In terms of assembly, interacts with eif4g1, eif4g2 and slbp; probably tethered by SLBP to the 3'-end of mRNAs ending with the histone stem-loop, it also interacts with eif4g1 which is bound to their 5'-end.

It is found in the cytoplasm. The protein resides in the nucleus. In terms of biological role, functions in replication-dependent translation of histone mRNAs which differ from other eukaryotic mRNAs in that they do not end with a poly-A tail but a stem-loop. May participate in circularizing those mRNAs specifically enhancing their translation. This chain is MIF4G domain-containing protein B (mif4gd-b), found in Xenopus laevis (African clawed frog).